The primary structure comprises 872 residues: Tetratricopeptide repeat protein 16 (872 aa).

The tract at residues 1 to 20 (MTDSDEDALKVDQGPSQDIP) is disordered. TPR repeat units lie at residues 61-94 (VREYYSRGQQCLEQADWETAVLFFSRALHLDPQL), 96-128 (DFYALRAEAYLQLCDFSSAAQNLRRAYSLQQDN), 136-169 (TFVLYLQGQCLFEQCAFLDALNVFSHAAELQPEK), 251-284 (AQQARQDAGILAVQGRLQHALQRINCAIENNPLD), 285-318 (PSFFLFRGTMYRRLQEFDGAVEDFLKVLDMVTED), 331-364 (LLTYNDFAVHCYRQGAYQEGVLLLNKALRDEQQE), 365-398 (KGLYINRGDCFFQLGNLAFAEADYQQALALSPQD), and 406-439 (GLLQEKMGFCEQKHRQFQKAEDHFSTAIRHNPQK). Disordered regions lie at residues 557–640 (ATPE…ETET) and 653–872 (TAMT…YEVL). The segment covering 577-590 (KEEEEKEEEEQKEE) has biased composition (acidic residues). Residues 591–604 (EEQKKEEKKEEKKP) show a composition bias toward basic and acidic residues. Polar residues-rich tracts occupy residues 610–640 (KVASLSESYLDQTSLASSMSFRTTCTSETET), 653–675 (TAMTFSDSSLLKTQSSDSGNNRE), 689–709 (GQRQSLSKTQATQSQRQNFSK), and 721–754 (KTKATQGQGRRSSKTEATQGQRQSSSEIETSQGP). Residues 762–783 (KTTRSPRQRPRKVKAARGRSWR) show a composition bias toward basic residues. 2 stretches are compositionally biased toward polar residues: residues 799-827 (RSSTKTEAFYDSNWSLSKTEDVQGQGQRT) and 839-861 (GMSSTSSKAESTWGPSPSVSKTE).

The sequence is that of Tetratricopeptide repeat protein 16 (TTC16) from Macaca fascicularis (Crab-eating macaque).